The primary structure comprises 656 residues: NADH-ubiquinone oxidoreductase chain 5 (656 aa).

A run of 17 helical transmembrane segments spans residues 5–23 (IIILPVLGSIVAGFFGRKL), 30–52 (IITCSCVIVTTILALLAWVEVGF), 81–103 (LTVSMLLPVLIISSLVHIYSISY), 112–129 (RFFSYLSLFTFMMIILVT), 133–155 (YLLMFVGWEGVGVCSYLLVSFWF), 168–190 (FLTNRVGDCFLTIGMFAILWSLG), 200–222 (LAPYINENIITIIGICLVIGAMA), 243–262 (VSALIHAATMVTAGVYLLMR), 272–294 (TVLLICLWLGAITTVFSSLVGLF), 301–320 (VIAYSTMSQLGLMVVAIGLS), 324–346 (IALFHLVNHAFYKAALFLGAGSI), 367–389 (PLTYSIILIASLSLAAFPFLTGF), 409–431 (SVYAISTIGAIFTTLYSVKVIYL), 452–471 (IFLTLPLVILAIFSIFFGYL), 514–536 (FIFTVLFSILAILLSEFIPGSVF), 607–629 (LSTGVVTSYALYILLGLISFIII), and 634–653 (QISSSLIVLLIILTLFSLNF).

Belongs to the complex I subunit 5 family.

The protein localises to the mitochondrion inner membrane. The enzyme catalyses a ubiquinone + NADH + 5 H(+)(in) = a ubiquinol + NAD(+) + 4 H(+)(out). Its function is as follows. Core subunit of the mitochondrial membrane respiratory chain NADH dehydrogenase (Complex I) that is believed to belong to the minimal assembly required for catalysis. Complex I functions in the transfer of electrons from NADH to the respiratory chain. The immediate electron acceptor for the enzyme is believed to be ubiquinone. The sequence is that of NADH-ubiquinone oxidoreductase chain 5 (ND5) from Cryphonectria parasitica (Chestnut blight fungus).